The sequence spans 563 residues: CTP synthase (563 aa).

Positions 1–280 (MTKFVFVTGG…DEMICMKLQL (280 aa)) are amidoligase domain. Serine 13 is a binding site for CTP. Serine 13 contributes to the UTP binding site. Residues 14–19 (SLGKGI) and aspartate 71 each bind ATP. Aspartate 71 and glutamate 154 together coordinate Mg(2+). Residues 161-163 (DIE), 201-206 (KTKPTQ), and lysine 237 contribute to the CTP site. UTP-binding positions include 201 to 206 (KTKPTQ) and lysine 237. The Glutamine amidotransferase type-1 domain occupies 305-557 (TIAMAGKYTE…IAAALEHHAA (253 aa)). An L-glutamine-binding site is contributed by glycine 366. The active-site Nucleophile; for glutamine hydrolysis is the cysteine 393. Residues 394-397 (LGMQ), glutamate 417, and arginine 483 contribute to the L-glutamine site. Active-site residues include histidine 530 and glutamate 532.

The protein belongs to the CTP synthase family. Homotetramer.

It catalyses the reaction UTP + L-glutamine + ATP + H2O = CTP + L-glutamate + ADP + phosphate + 2 H(+). It carries out the reaction L-glutamine + H2O = L-glutamate + NH4(+). The catalysed reaction is UTP + NH4(+) + ATP = CTP + ADP + phosphate + 2 H(+). It participates in pyrimidine metabolism; CTP biosynthesis via de novo pathway; CTP from UDP: step 2/2. Allosterically activated by GTP, when glutamine is the substrate; GTP has no effect on the reaction when ammonia is the substrate. The allosteric effector GTP functions by stabilizing the protein conformation that binds the tetrahedral intermediate(s) formed during glutamine hydrolysis. Inhibited by the product CTP, via allosteric rather than competitive inhibition. Catalyzes the ATP-dependent amination of UTP to CTP with either L-glutamine or ammonia as the source of nitrogen. Regulates intracellular CTP levels through interactions with the four ribonucleotide triphosphates. This chain is CTP synthase, found in Leptothrix cholodnii (strain ATCC 51168 / LMG 8142 / SP-6) (Leptothrix discophora (strain SP-6)).